Reading from the N-terminus, the 221-residue chain is Thiamine-phosphate synthase (221 aa).

4-amino-2-methyl-5-(diphosphooxymethyl)pyrimidine is bound by residues 41 to 45 (QLRDK) and N82. Residues D83 and D102 each coordinate Mg(2+). S120 is a 4-amino-2-methyl-5-(diphosphooxymethyl)pyrimidine binding site. 146-148 (TPT) is a binding site for 2-[(2R,5Z)-2-carboxy-4-methylthiazol-5(2H)-ylidene]ethyl phosphate. A 4-amino-2-methyl-5-(diphosphooxymethyl)pyrimidine-binding site is contributed by K149. Residue G177 participates in 2-[(2R,5Z)-2-carboxy-4-methylthiazol-5(2H)-ylidene]ethyl phosphate binding.

This sequence belongs to the thiamine-phosphate synthase family. Mg(2+) is required as a cofactor.

The catalysed reaction is 2-[(2R,5Z)-2-carboxy-4-methylthiazol-5(2H)-ylidene]ethyl phosphate + 4-amino-2-methyl-5-(diphosphooxymethyl)pyrimidine + 2 H(+) = thiamine phosphate + CO2 + diphosphate. The enzyme catalyses 2-(2-carboxy-4-methylthiazol-5-yl)ethyl phosphate + 4-amino-2-methyl-5-(diphosphooxymethyl)pyrimidine + 2 H(+) = thiamine phosphate + CO2 + diphosphate. It carries out the reaction 4-methyl-5-(2-phosphooxyethyl)-thiazole + 4-amino-2-methyl-5-(diphosphooxymethyl)pyrimidine + H(+) = thiamine phosphate + diphosphate. Its pathway is cofactor biosynthesis; thiamine diphosphate biosynthesis; thiamine phosphate from 4-amino-2-methyl-5-diphosphomethylpyrimidine and 4-methyl-5-(2-phosphoethyl)-thiazole: step 1/1. Condenses 4-methyl-5-(beta-hydroxyethyl)thiazole monophosphate (THZ-P) and 2-methyl-4-amino-5-hydroxymethyl pyrimidine pyrophosphate (HMP-PP) to form thiamine monophosphate (TMP). In Mycolicibacterium vanbaalenii (strain DSM 7251 / JCM 13017 / BCRC 16820 / KCTC 9966 / NRRL B-24157 / PYR-1) (Mycobacterium vanbaalenii), this protein is Thiamine-phosphate synthase.